The primary structure comprises 381 residues: MAIFIRKTHPLLKIMNHALVDLPAPSNISLWWNFGSLLGLCLIIQILTGLFLAMHYTADVSMAFSSVVHICRDVNYGWLIRNIHANGASLFFICVYLHIARGLYYGSYLYKETWNIGVILLFLLMATAFVGYVLPWGQMSFWGATVITNLLSAFPYIGNMLVQWIWGGFSVDNATLTRFFAFHFLLPFLILALTIIHLLFLHETGSNNPLGINSDADKISFHPYFSYKDLLGFFVMIFFLTTLALFMPNLLGDAENFIPANPLVTPPHIKPEWYFLFAYAILRSIPNKLGGVLALLFSIFILMLVPLLHTSKQRSNIFRPLTQIFFWLLVANSIILTWIGGQPVEQPFITVGQIASVSYFSLFLIIMPFASWCENKILSLN.

The next 4 helical transmembrane spans lie at 34 to 54, 78 to 99, 114 to 134, and 179 to 199; these read FGSL…FLAM, WLIR…YLHI, WNIG…GYVL, and FFAF…IHLL. Residues His84 and His98 each contribute to the heme b site. Heme b is bound by residues His183 and His197. His202 serves as a coordination point for a ubiquinone. 4 helical membrane-spanning segments follow: residues 227 to 247, 289 to 309, 321 to 341, and 348 to 368; these read YKDL…ALFM, LGGV…PLLH, LTQI…WIGG, and FITV…IIMP.

This sequence belongs to the cytochrome b family. As to quaternary structure, the cytochrome bc1 complex contains 3 respiratory subunits (MT-CYB, CYC1 and UQCRFS1), 2 core proteins (UQCRC1 and UQCRC2) and probably 6 low-molecular weight proteins. It depends on heme b as a cofactor.

The protein localises to the mitochondrion inner membrane. Functionally, component of the ubiquinol-cytochrome c reductase complex (complex III or cytochrome b-c1 complex) that is part of the mitochondrial respiratory chain. The b-c1 complex mediates electron transfer from ubiquinol to cytochrome c. Contributes to the generation of a proton gradient across the mitochondrial membrane that is then used for ATP synthesis. This Sphyrna tiburo tiburo (Hammerhead shark) protein is Cytochrome b (mt-cyb).